We begin with the raw amino-acid sequence, 265 residues long: UPF0026 protein slr1464 (265 aa).

Residues 16–252 (RYGRSLGIDP…QNLAKKISGA (237 aa)) form the Radical SAM core domain. Residues C32, C36, and C39 each coordinate [4Fe-4S] cluster. Positions 204–230 (RPTRPKPLQRELEGRGNHTGTPYGDRP) are disordered.

It belongs to the UPF0026 family. [4Fe-4S] cluster serves as cofactor.

This Synechocystis sp. (strain ATCC 27184 / PCC 6803 / Kazusa) protein is UPF0026 protein slr1464.